We begin with the raw amino-acid sequence, 941 residues long: Cilia- and flagella-associated protein 69 (941 aa).

It localises to the cell projection. It is found in the cilium. Its subcellular location is the flagellum. Functionally, cilium- and flagellum-associated protein. In the olfactory epithelium, regulates the speed of activation and termination of the odor response and thus contributes to the robustness of olfactory transduction pathways. Required for sperm flagellum assembly and stability. The chain is Cilia- and flagella-associated protein 69 from Callithrix jacchus (White-tufted-ear marmoset).